The following is a 199-amino-acid chain: MKAIILAGGHSVRFGKPKAFAEVNGETFYSRVIKTLESTNMFNEIIISTNAQLATQFKYPNVVIDDENHNDKGPLAGIYTIMKQHPEEELFFVVSVDTPMITGKAVSTLYQFLVSHLIENHLDVAAFKEDGRFIPTIAFYSPNALGAITKALHSDNYSFKNIYHELSTDYLDVRDVDAPSYWYKNINYQHDLDALIQKL.

GTP contacts are provided by residues 6–8 (LAG), Lys18, Asp65, and Asp97. Position 97 (Asp97) interacts with Mg(2+).

This sequence belongs to the MobA family. It depends on Mg(2+) as a cofactor.

It is found in the cytoplasm. It carries out the reaction Mo-molybdopterin + GTP + H(+) = Mo-molybdopterin guanine dinucleotide + diphosphate. Transfers a GMP moiety from GTP to Mo-molybdopterin (Mo-MPT) cofactor (Moco or molybdenum cofactor) to form Mo-molybdopterin guanine dinucleotide (Mo-MGD) cofactor. The sequence is that of Probable molybdenum cofactor guanylyltransferase from Staphylococcus aureus (strain Mu50 / ATCC 700699).